A 128-amino-acid chain; its full sequence is Small ribosomal subunit protein bS6 (128 aa).

Belongs to the bacterial ribosomal protein bS6 family.

Functionally, binds together with bS18 to 16S ribosomal RNA. The sequence is that of Small ribosomal subunit protein bS6 from Thermotoga petrophila (strain ATCC BAA-488 / DSM 13995 / JCM 10881 / RKU-1).